We begin with the raw amino-acid sequence, 117 residues long: Immunoglobulin kappa variable 1D-43 (117 aa).

Positions 1–22 (MDMRVPAQRLGLLLLWFPGARC) are cleaved as a signal peptide. Residues 23-45 (AIRMTQSPFSLSASVGDRVTITC) are framework-1. The Ig-like domain occupies 23 to 117 (AIRMTQSPFS…YYCQQYYSTP (95 aa)). Cys-45 and Cys-110 form a disulfide bridge. The tract at residues 46 to 56 (WASQGISSYLA) is complementarity-determining-1. Residues 57–71 (WYQQKPAKAPKLFIY) are framework-2. Residues 72–78 (YASSLQS) are complementarity-determining-2. The interval 79 to 110 (GVPSRFSGSGSGTDYTLTISSLQPEDFATYYC) is framework-3. Residues 111–117 (QQYYSTP) are complementarity-determining-3.

As to quaternary structure, immunoglobulins are composed of two identical heavy chains and two identical light chains; disulfide-linked.

Its subcellular location is the secreted. It is found in the cell membrane. V region of the variable domain of immunoglobulin light chains that participates in the antigen recognition. Immunoglobulins, also known as antibodies, are membrane-bound or secreted glycoproteins produced by B lymphocytes. In the recognition phase of humoral immunity, the membrane-bound immunoglobulins serve as receptors which, upon binding of a specific antigen, trigger the clonal expansion and differentiation of B lymphocytes into immunoglobulins-secreting plasma cells. Secreted immunoglobulins mediate the effector phase of humoral immunity, which results in the elimination of bound antigens. The antigen binding site is formed by the variable domain of one heavy chain, together with that of its associated light chain. Thus, each immunoglobulin has two antigen binding sites with remarkable affinity for a particular antigen. The variable domains are assembled by a process called V-(D)-J rearrangement and can then be subjected to somatic hypermutations which, after exposure to antigen and selection, allow affinity maturation for a particular antigen. The protein is Immunoglobulin kappa variable 1D-43 of Homo sapiens (Human).